Reading from the N-terminus, the 379-residue chain is Probable pectin lyase A (379 aa).

Residues 1-19 (MKFALLSGVAAGLLPVVSA) form the signal peptide. Disulfide bonds link Cys82/Cys101 and Cys91/Cys225. Arg255 is a catalytic residue. The cysteines at positions 322 and 330 are disulfide-linked.

Belongs to the polysaccharide lyase 1 family.

The protein resides in the secreted. It catalyses the reaction Eliminative cleavage of (1-&gt;4)-alpha-D-galacturonan methyl ester to give oligosaccharides with 4-deoxy-6-O-methyl-alpha-D-galact-4-enuronosyl groups at their non-reducing ends.. Pectinolytic enzymes consist of four classes of enzymes: pectin lyase, polygalacturonase, pectin methylesterase and rhamnogalacturonase. Among pectinolytic enzymes, pectin lyase is the most important in depolymerization of pectin, since it cleaves internal glycosidic bonds of highly methylated pectins. This chain is Probable pectin lyase A (pelA), found in Aspergillus oryzae (strain ATCC 42149 / RIB 40) (Yellow koji mold).